Here is a 360-residue protein sequence, read N- to C-terminus: sn-glycerol-3-phosphate import ATP-binding protein UgpC (360 aa).

In terms of domain architecture, ABC transporter spans 4 to 235; the sequence is LSLKGVRKSY…PATTFVASFI (232 aa). 37–44 lines the ATP pocket; sequence GPSGCGKS.

It belongs to the ABC transporter superfamily. sn-glycerol-3-phosphate importer (TC 3.A.1.1.3) family. The complex is composed of two ATP-binding proteins (UgpC), two transmembrane proteins (UgpA and UgpE) and a solute-binding protein (UgpB).

It localises to the cell inner membrane. It catalyses the reaction sn-glycerol 3-phosphate(out) + ATP + H2O = sn-glycerol 3-phosphate(in) + ADP + phosphate + H(+). In terms of biological role, part of the ABC transporter complex UgpBAEC involved in sn-glycerol-3-phosphate (G3P) import. Responsible for energy coupling to the transport system. This is sn-glycerol-3-phosphate import ATP-binding protein UgpC from Burkholderia thailandensis (strain ATCC 700388 / DSM 13276 / CCUG 48851 / CIP 106301 / E264).